The chain runs to 257 residues: 3-deoxy-manno-octulosonate cytidylyltransferase (257 aa).

This sequence belongs to the KdsB family.

The protein resides in the cytoplasm. The enzyme catalyses 3-deoxy-alpha-D-manno-oct-2-ulosonate + CTP = CMP-3-deoxy-beta-D-manno-octulosonate + diphosphate. Its pathway is nucleotide-sugar biosynthesis; CMP-3-deoxy-D-manno-octulosonate biosynthesis; CMP-3-deoxy-D-manno-octulosonate from 3-deoxy-D-manno-octulosonate and CTP: step 1/1. It participates in bacterial outer membrane biogenesis; lipopolysaccharide biosynthesis. Activates KDO (a required 8-carbon sugar) for incorporation into bacterial lipopolysaccharide in Gram-negative bacteria. The protein is 3-deoxy-manno-octulosonate cytidylyltransferase of Stenotrophomonas maltophilia (strain R551-3).